The following is a 320-amino-acid chain: N-acetylneuraminate lyase (320 aa).

Residues threonine 51 and threonine 52 each contribute to the aceneuramate site. Residue tyrosine 143 is the Proton donor of the active site. Lysine 173 functions as the Schiff-base intermediate with substrate in the catalytic mechanism. Serine 175, glycine 199, aspartate 201, glutamate 202, and serine 218 together coordinate aceneuramate.

The protein belongs to the DapA family. NanA subfamily. Homotetramer.

It localises to the cytoplasm. It catalyses the reaction aceneuramate = aldehydo-N-acetyl-D-mannosamine + pyruvate. Its pathway is amino-sugar metabolism; N-acetylneuraminate degradation. Its function is as follows. Catalyzes the cleavage of N-acetylneuraminic acid (sialic acid) to form pyruvate and N-acetylmannosamine via a Schiff base intermediate. It prevents sialic acids from being recycled and returning to the cell surface. Involved in the N-glycolylneuraminic acid (Neu5Gc) degradation pathway. The protein is N-acetylneuraminate lyase of Rattus norvegicus (Rat).